The chain runs to 210 residues: Probable GTP-binding protein EngB (210 aa).

The EngB-type G domain occupies 30 to 204 (QGYEVAFAGR…YRVLADWMEL (175 aa)). GTP is bound by residues 38 to 45 (GRSNAGKS), 64 to 68 (GRTQL), 82 to 85 (DLPG), 149 to 152 (TKAD), and 182 to 185 (LFSA). Residues S45 and T66 each coordinate Mg(2+).

It belongs to the TRAFAC class TrmE-Era-EngA-EngB-Septin-like GTPase superfamily. EngB GTPase family. It depends on Mg(2+) as a cofactor.

Necessary for normal cell division and for the maintenance of normal septation. The chain is Probable GTP-binding protein EngB from Pseudomonas entomophila (strain L48).